A 667-amino-acid chain; its full sequence is uncharacterized protein (667 aa).

This is an uncharacterized protein from Magallana gigas (Pacific oyster).